A 142-amino-acid chain; its full sequence is MAKKVQAYVKLQVAAGMANPSPPVGPALGQQGVNIMEFCKAFNAKTDSIEKGLPIPVVITVYADRSFTFVTKTPPAAVLLKKAAGIKSGAGKPNKDKVGKISRAQLQEIAQTKAADMTGADIEAMTRSIEGTARSMGLVVED.

Belongs to the universal ribosomal protein uL11 family. As to quaternary structure, part of the ribosomal stalk of the 50S ribosomal subunit. Interacts with L10 and the large rRNA to form the base of the stalk. L10 forms an elongated spine to which L12 dimers bind in a sequential fashion forming a multimeric L10(L12)X complex. Post-translationally, one or more lysine residues are methylated.

Forms part of the ribosomal stalk which helps the ribosome interact with GTP-bound translation factors. The protein is Large ribosomal subunit protein uL11 of Shigella boydii serotype 4 (strain Sb227).